Here is a 294-residue protein sequence, read N- to C-terminus: Diaminopimelate epimerase (294 aa).

The substrate site is built by Asn13, Gln46, and Asn69. Cys78 acts as the Proton donor in catalysis. Substrate-binding positions include 79–80 (GN), Asn173, Asn206, and 224–225 (ER). The active-site Proton acceptor is the Cys233. 234–235 (GT) lines the substrate pocket.

This sequence belongs to the diaminopimelate epimerase family. As to quaternary structure, homodimer.

The protein resides in the cytoplasm. It carries out the reaction (2S,6S)-2,6-diaminopimelate = meso-2,6-diaminopimelate. Its pathway is amino-acid biosynthesis; L-lysine biosynthesis via DAP pathway; DL-2,6-diaminopimelate from LL-2,6-diaminopimelate: step 1/1. In terms of biological role, catalyzes the stereoinversion of LL-2,6-diaminopimelate (L,L-DAP) to meso-diaminopimelate (meso-DAP), a precursor of L-lysine and an essential component of the bacterial peptidoglycan. The polypeptide is Diaminopimelate epimerase (Variovorax paradoxus (strain S110)).